Consider the following 360-residue polypeptide: Probable neutral protease 2 homolog A (360 aa).

The N-terminal stretch at methionine 1–alanine 17 is a signal peptide. A propeptide spanning residues alanine 18 to arginine 183 is cleaved from the precursor. 3 disulfides stabilise this stretch: cysteine 191–cysteine 262, cysteine 269–cysteine 287, and cysteine 300–cysteine 360. An N-linked (GlcNAc...) asparagine glycan is attached at asparagine 205. Histidine 311 provides a ligand contact to Zn(2+). Residue glutamate 312 is part of the active site. Positions 315 and 326 each coordinate Zn(2+).

Belongs to the peptidase M35 family. Zn(2+) serves as cofactor.

It localises to the secreted. The enzyme catalyses Preferential cleavage of bonds with hydrophobic residues in P1'. Also 3-Asn-|-Gln-4 and 8-Gly-|-Ser-9 bonds in insulin B chain.. Its function is as follows. Probable secreted metalloprotease that shows high activities on basic nuclear substrates such as histone and protamine. May be involved in virulence. The protein is Probable neutral protease 2 homolog A (NpII-A) of Trichophyton rubrum (Athlete's foot fungus).